A 108-amino-acid chain; its full sequence is Ribonuclease P protein component (108 aa).

It belongs to the RnpA family. Consists of a catalytic RNA component (M1 or rnpB) and a protein subunit.

The enzyme catalyses Endonucleolytic cleavage of RNA, removing 5'-extranucleotides from tRNA precursor.. Functionally, RNaseP catalyzes the removal of the 5'-leader sequence from pre-tRNA to produce the mature 5'-terminus. It can also cleave other RNA substrates such as 4.5S RNA. The protein component plays an auxiliary but essential role in vivo by binding to the 5'-leader sequence and broadening the substrate specificity of the ribozyme. The protein is Ribonuclease P protein component of Campylobacter jejuni subsp. doylei (strain ATCC BAA-1458 / RM4099 / 269.97).